Reading from the N-terminus, the 213-residue chain is Protein FAM156A/FAM156B (213 aa).

Met1 is subject to N-acetylmethionine. The tract at residues 1–62 is disordered; sequence MDPLQKRNPA…SQAVPLPEGL (62 aa). The span at 8–37 shows a compositional bias: polar residues; that stretch reads NPASPSKSSPMTAAETSQEGPAPSQPSYSE. A Phosphoserine modification is found at Ser114. The helical transmembrane segment at 154–170 threads the bilayer; sequence WETLVQGLSGLTLSLGT. The disordered stretch occupies residues 165–198; it reads TLSLGTNQPGPLPEAALQPQETEEKRQRERQQES. A compositionally biased stretch (basic and acidic residues) spans 186–197; that stretch reads TEEKRQRERQQE.

Its subcellular location is the membrane. This is Protein FAM156A/FAM156B (FAM156A) from Homo sapiens (Human).